The primary structure comprises 293 residues: MAQLQVTLEVAAGDLDAVDGALELAGALSQTYQADDGTVLLEPGVGEHPLWEQVRVDALFPPETDPDALHTLLAGQLGERLRGWQAETLEDRAWEREWLDHFRPMAFGERLWIVPTGAEPELPAGAVPIHLDPGLAFGTGTHETTALCLEWLDGEPIAGRNGLDYGAGSGILAVAAVRLGAACCMAVDNDPQAVVASRENAERNGVAEDVPSYAVDQRPAYCADFLVANILASTLVDLADELRDGVRVGGRLALSGILRGQEQQVMDAFQGGIAWDAPRCCGDWVLVSGTRTA.

Positions 145, 166, 188, and 229 each coordinate S-adenosyl-L-methionine.

This sequence belongs to the methyltransferase superfamily. PrmA family.

The protein localises to the cytoplasm. The enzyme catalyses L-lysyl-[protein] + 3 S-adenosyl-L-methionine = N(6),N(6),N(6)-trimethyl-L-lysyl-[protein] + 3 S-adenosyl-L-homocysteine + 3 H(+). Methylates ribosomal protein L11. This chain is Ribosomal protein L11 methyltransferase, found in Halorhodospira halophila (strain DSM 244 / SL1) (Ectothiorhodospira halophila (strain DSM 244 / SL1)).